The primary structure comprises 528 residues: (R)-citramalate synthase (528 aa).

In terms of domain architecture, Pyruvate carboxyltransferase spans 5–271 (VYIYDTTLRD…IPQENLKKLT (267 aa)).

This sequence belongs to the alpha-IPM synthase/homocitrate synthase family.

The enzyme catalyses pyruvate + acetyl-CoA + H2O = (3R)-citramalate + CoA + H(+). The protein operates within amino-acid biosynthesis; L-isoleucine biosynthesis; 2-oxobutanoate from pyruvate: step 1/3. In terms of biological role, catalyzes the condensation of pyruvate and acetyl-coenzyme A to form (R)-citramalate. In Aquifex aeolicus (strain VF5), this protein is (R)-citramalate synthase.